Consider the following 316-residue polypeptide: Ornithine carbamoyltransferase (316 aa).

Carbamoyl phosphate is bound by residues 59 to 62 (STRT), Gln86, Arg110, and 137 to 140 (HPCQ). L-ornithine is bound by residues Asn168, Asp232, and 236–237 (SM). Carbamoyl phosphate-binding positions include 273 to 274 (CL) and Arg301.

It belongs to the aspartate/ornithine carbamoyltransferase superfamily. OTCase family.

Its subcellular location is the cytoplasm. The catalysed reaction is carbamoyl phosphate + L-ornithine = L-citrulline + phosphate + H(+). The protein operates within amino-acid biosynthesis; L-arginine biosynthesis; L-arginine from L-ornithine and carbamoyl phosphate: step 1/3. In terms of biological role, reversibly catalyzes the transfer of the carbamoyl group from carbamoyl phosphate (CP) to the N(epsilon) atom of ornithine (ORN) to produce L-citrulline. The polypeptide is Ornithine carbamoyltransferase (Listeria innocua serovar 6a (strain ATCC BAA-680 / CLIP 11262)).